The primary structure comprises 332 residues: Alanine racemase (332 aa).

Lys33 (proton acceptor; specific for D-alanine) is an active-site residue. Lys33 is modified (N6-(pyridoxal phosphate)lysine). Arg115 provides a ligand contact to substrate. Residue Tyr245 is the Proton acceptor; specific for L-alanine of the active site. Substrate is bound at residue Met286.

Belongs to the alanine racemase family. Pyridoxal 5'-phosphate serves as cofactor.

It carries out the reaction L-alanine = D-alanine. It participates in amino-acid biosynthesis; D-alanine biosynthesis; D-alanine from L-alanine: step 1/1. Its function is as follows. Catalyzes the interconversion of L-alanine and D-alanine. May also act on other amino acids. In Nitratiruptor sp. (strain SB155-2), this protein is Alanine racemase (alr).